The primary structure comprises 295 residues: Putative nudix hydrolase 7 (295 aa).

The region spanning 9–182 (SWRSAASIIL…KYALPPPQVY (174 aa)) is the Nudix hydrolase domain. Positions 52 to 73 (TDAKLGDEFRIAAVRELFEESG) match the Nudix box motif. Mg(2+) is bound by residues Glu-67 and Glu-71.

Belongs to the Nudix hydrolase family. It depends on Mg(2+) as a cofactor. Mn(2+) is required as a cofactor.

Probably mediates the hydrolysis of some nucleoside diphosphate derivatives. The chain is Putative nudix hydrolase 7 (ndx-7) from Caenorhabditis elegans.